Consider the following 153-residue polypeptide: Small ribosomal subunit protein bS6 (153 aa).

The disordered stretch occupies residues glutamate 94–alanine 153.

The protein belongs to the bacterial ribosomal protein bS6 family.

In terms of biological role, binds together with bS18 to 16S ribosomal RNA. This Allorhizobium ampelinum (strain ATCC BAA-846 / DSM 112012 / S4) (Agrobacterium vitis (strain S4)) protein is Small ribosomal subunit protein bS6.